Reading from the N-terminus, the 149-residue chain is Glucosamine 6-phosphate N-acetyltransferase (149 aa).

Residues 5–149 (FKIRKLEISD…KSIQMSKYFD (145 aa)) enclose the N-acetyltransferase domain. Substrate contacts are provided by residues Thr-27, 75-78 (KFLR), and 87-89 (EDV). 97–102 (GKQLGK) contributes to the acetyl-CoA binding site. A substrate-binding site is contributed by 118 to 119 (YK). An acetyl-CoA-binding site is contributed by 132–134 (YEK).

It belongs to the acetyltransferase family. GNA1 subfamily. As to quaternary structure, homodimer. As to expression, expressed in roots, leaves, stems, cauline leaves, flowers and siliques.

The protein resides in the endoplasmic reticulum membrane. It catalyses the reaction D-glucosamine 6-phosphate + acetyl-CoA = N-acetyl-D-glucosamine 6-phosphate + CoA + H(+). Its pathway is nucleotide-sugar biosynthesis; UDP-N-acetyl-alpha-D-glucosamine biosynthesis; N-acetyl-alpha-D-glucosamine 1-phosphate from alpha-D-glucosamine 6-phosphate (route I): step 1/2. Its function is as follows. Acetyltransferase involved in UDP-N-acetylglucosamine (UDP-GlcNAc) biosynthesis. UDP-GlcNAc is an essential metabolite that serves as an initial sugar donor for N-glycan synthesis and thus plays an important role in protein and lipid glycosylation. In Arabidopsis thaliana (Mouse-ear cress), this protein is Glucosamine 6-phosphate N-acetyltransferase (GNA1).